Consider the following 356-residue polypeptide: Photosystem II protein D1 (356 aa).

Transmembrane regions (helical) follow at residues 29-46, 118-133, and 142-156; these read YVGW…TATT, HFLI…QWEL, and WICV…AATA. Chlorophyll a is bound at residue His118. Residue Tyr126 coordinates pheophytin a. [CaMn4O5] cluster contacts are provided by Asp170 and Glu189. A helical transmembrane segment spans residues 197-218; it reads FHMLGVAGVFGGSLFSAMHGSL. His198 is a binding site for chlorophyll a. Residues His215 and 264–265 contribute to the a quinone site; that span reads SF. His215 serves as a coordination point for Fe cation. His272 is a Fe cation binding site. Residues 274–288 traverse the membrane as a helical segment; the sequence is FLGAWPVIGIWFTAM. [CaMn4O5] cluster is bound by residues His332, Glu333, Asp342, and Ala344. The propeptide occupies 345–356; it reads SAEPVSAPVING.

It belongs to the reaction center PufL/M/PsbA/D family. In terms of assembly, PSII is composed of 1 copy each of membrane proteins PsbA, PsbB, PsbC, PsbD, PsbE, PsbF, PsbH, PsbI, PsbJ, PsbK, PsbL, PsbM, PsbT, PsbX, PsbY, PsbZ, Psb30/Ycf12, peripheral proteins PsbO, CyanoQ (PsbQ), PsbU, PsbV and a large number of cofactors. It forms dimeric complexes. The cofactor is The D1/D2 heterodimer binds P680, chlorophylls that are the primary electron donor of PSII, and subsequent electron acceptors. It shares a non-heme iron and each subunit binds pheophytin, quinone, additional chlorophylls, carotenoids and lipids. D1 provides most of the ligands for the Mn4-Ca-O5 cluster of the oxygen-evolving complex (OEC). There is also a Cl(-1) ion associated with D1 and D2, which is required for oxygen evolution. The PSII complex binds additional chlorophylls, carotenoids and specific lipids.. Tyr-161 forms a radical intermediate that is referred to as redox-active TyrZ, YZ or Y-Z. Post-translationally, C-terminally processed by CtpA; processing is essential to allow assembly of the oxygen-evolving complex and thus photosynthetic growth.

It localises to the cellular thylakoid membrane. It carries out the reaction 2 a plastoquinone + 4 hnu + 2 H2O = 2 a plastoquinol + O2. Functionally, photosystem II (PSII) is a light-driven water:plastoquinone oxidoreductase that uses light energy to abstract electrons from H(2)O, generating O(2) and a proton gradient subsequently used for ATP formation. It consists of a core antenna complex that captures photons, and an electron transfer chain that converts photonic excitation into a charge separation. The D1/D2 (PsbA/PsbD) reaction center heterodimer binds P680, the primary electron donor of PSII as well as several subsequent electron acceptors. The chain is Photosystem II protein D1 from Crocosphaera subtropica (strain ATCC 51142 / BH68) (Cyanothece sp. (strain ATCC 51142)).